The following is a 222-amino-acid chain: PKHD-type hydroxylase P9301_13621 (222 aa).

Residues Lys81 to Ser175 enclose the Fe2OG dioxygenase domain. The Fe cation site is built by His99, Asp101, and His156. Arg166 lines the 2-oxoglutarate pocket.

It depends on Fe(2+) as a cofactor. Requires L-ascorbate as cofactor.

This chain is PKHD-type hydroxylase P9301_13621, found in Prochlorococcus marinus (strain MIT 9301).